A 644-amino-acid polypeptide reads, in one-letter code: Acetyl-coenzyme A synthetase (644 aa).

Residues 189–192 and Thr307 contribute to the CoA site; that span reads RGGK. ATP contacts are provided by residues 383–385, 407–412, Asp496, and Arg511; these read GEP and DTWWQT. Ser519 is a CoA binding site. Arg522 is an ATP binding site. Mg(2+)-binding residues include Val533, His535, and Val538. Arg580 contributes to the CoA binding site. At Lys605 the chain carries N6-acetyllysine.

The protein belongs to the ATP-dependent AMP-binding enzyme family. Mg(2+) is required as a cofactor. In terms of processing, acetylated. Deacetylation by the SIR2-homolog deacetylase activates the enzyme.

The enzyme catalyses acetate + ATP + CoA = acetyl-CoA + AMP + diphosphate. Functionally, catalyzes the conversion of acetate into acetyl-CoA (AcCoA), an essential intermediate at the junction of anabolic and catabolic pathways. AcsA undergoes a two-step reaction. In the first half reaction, AcsA combines acetate with ATP to form acetyl-adenylate (AcAMP) intermediate. In the second half reaction, it can then transfer the acetyl group from AcAMP to the sulfhydryl group of CoA, forming the product AcCoA. This Rubrobacter xylanophilus (strain DSM 9941 / JCM 11954 / NBRC 16129 / PRD-1) protein is Acetyl-coenzyme A synthetase.